Reading from the N-terminus, the 263-residue chain is Indolethylamine N-methyltransferase (263 aa).

K13 is subject to N6-succinyllysine. S-adenosyl-L-methionine-binding positions include Y20, Y25, 63–64, Y69, D85, and N90; that span reads GS. K96 carries the post-translational modification N6-succinyllysine. Residues 142 to 143 and L163 each bind S-adenosyl-L-methionine; that span reads DV.

Belongs to the class I-like SAM-binding methyltransferase superfamily. NNMT/PNMT/TEMT family. As to quaternary structure, monomer.

It is found in the cytoplasm. It catalyses the reaction a tertiary amine + S-adenosyl-L-methionine = a methylated tertiary amine + S-adenosyl-L-homocysteine + H(+). The enzyme catalyses a secondary amine + S-adenosyl-L-methionine = a methylated secondary amine + S-adenosyl-L-homocysteine + H(+). The catalysed reaction is a primary amine + S-adenosyl-L-methionine = a methylated primary amine + S-adenosyl-L-homocysteine + H(+). It carries out the reaction dimethyl sulfide + S-adenosyl-L-methionine = trimethylsulfonium + S-adenosyl-L-homocysteine. Its function is as follows. Catalyzes the N-methylation of tryptamine and structurally related compounds. Functions as a thioether S-methyltransferase and is active with a variety of thioethers and the corresponding selenium and tellurium compounds, including 3-methylthiopropionaldehyde, dimethyl selenide, dimethyl telluride, 2-methylthioethylamine, 2-methylthioethanol, methyl-n-propyl sulfide and diethyl sulfide. Plays an important role in the detoxification of selenium compounds. The chain is Indolethylamine N-methyltransferase (INMT) from Pongo abelii (Sumatran orangutan).